Consider the following 332-residue polypeptide: Glycerol-3-phosphate dehydrogenase [NAD(P)+] (332 aa).

NADPH contacts are provided by Trp-11, Arg-30, and Lys-108. Sn-glycerol 3-phosphate contacts are provided by Lys-108, Gly-137, and Ser-139. NADPH is bound at residue Ala-141. 5 residues coordinate sn-glycerol 3-phosphate: Lys-192, Asp-245, Ser-255, Arg-256, and Asn-257. Lys-192 functions as the Proton acceptor in the catalytic mechanism. NADPH is bound at residue Arg-256. NADPH contacts are provided by Val-280 and Glu-282.

It belongs to the NAD-dependent glycerol-3-phosphate dehydrogenase family.

It is found in the cytoplasm. It carries out the reaction sn-glycerol 3-phosphate + NAD(+) = dihydroxyacetone phosphate + NADH + H(+). The enzyme catalyses sn-glycerol 3-phosphate + NADP(+) = dihydroxyacetone phosphate + NADPH + H(+). Its pathway is membrane lipid metabolism; glycerophospholipid metabolism. Catalyzes the reduction of the glycolytic intermediate dihydroxyacetone phosphate (DHAP) to sn-glycerol 3-phosphate (G3P), the key precursor for phospholipid synthesis. The protein is Glycerol-3-phosphate dehydrogenase [NAD(P)+] of Burkholderia ambifaria (strain MC40-6).